The primary structure comprises 98 residues: Integration host factor subunit beta (98 aa).

It belongs to the bacterial histone-like protein family. In terms of assembly, heterodimer of an alpha and a beta chain.

Its function is as follows. This protein is one of the two subunits of integration host factor, a specific DNA-binding protein that functions in genetic recombination as well as in transcriptional and translational control. This Marinobacter nauticus (strain ATCC 700491 / DSM 11845 / VT8) (Marinobacter aquaeolei) protein is Integration host factor subunit beta.